We begin with the raw amino-acid sequence, 38 residues long: Potassium channel toxin alpha-KTx 3.17 (38 aa).

3 disulfide bridges follow: Cys-8/Cys-28, Cys-14/Cys-33, and Cys-18/Cys-35.

This sequence belongs to the short scorpion toxin superfamily. Potassium channel inhibitor family. Alpha-KTx 03 subfamily. Expressed by the venom gland.

It localises to the secreted. In terms of biological role, completely inhibits the (125)I-kaliotoxin binding on rat brain synaptosomes with high-affinity (IC(50)=0.1 nM). Is a potent Kv1.3/KCNA3 ligand. The chain is Potassium channel toxin alpha-KTx 3.17 from Buthus paris (Scorpion).